We begin with the raw amino-acid sequence, 808 residues long: Auxin response factor 4 (808 aa).

Pro residues predominate over residues M1–Q13. The interval M1–P20 is disordered. Residues F129–M231 constitute a DNA-binding region (TF-B3). Positions P342 to S352 are enriched in basic and acidic residues. Disordered stretches follow at residues P342–V433, T661–T691, and Q778–N808. Over residues A402 to D432 the composition is skewed to polar residues. Residues R692–N785 form the PB1 domain. The segment covering P787 to H799 has biased composition (basic and acidic residues).

This sequence belongs to the ARF family. Homodimers and heterodimers. As to expression, expressed in roots, culms, leaves and young panicles.

It is found in the nucleus. In terms of biological role, auxin response factors (ARFs) are transcriptional factors that bind specifically to the DNA sequence 5'-TGTCTC-3' found in the auxin-responsive promoter elements (AuxREs). The chain is Auxin response factor 4 (ARF4) from Oryza sativa subsp. japonica (Rice).